We begin with the raw amino-acid sequence, 273 residues long: NH(3)-dependent NAD(+) synthetase (273 aa).

34 to 41 (GLSGGIDS) contacts ATP. Asp40 contacts Mg(2+). A deamido-NAD(+)-binding site is contributed by Arg116. ATP is bound at residue Thr136. Position 141 (Glu141) interacts with Mg(2+). ATP is bound by residues Lys165 and Ser187.

This sequence belongs to the NAD synthetase family. As to quaternary structure, homodimer.

It carries out the reaction deamido-NAD(+) + NH4(+) + ATP = AMP + diphosphate + NAD(+) + H(+). It participates in cofactor biosynthesis; NAD(+) biosynthesis; NAD(+) from deamido-NAD(+) (ammonia route): step 1/1. In terms of biological role, catalyzes the ATP-dependent amidation of deamido-NAD to form NAD. Uses ammonia as a nitrogen source. The polypeptide is NH(3)-dependent NAD(+) synthetase (Trichlorobacter lovleyi (strain ATCC BAA-1151 / DSM 17278 / SZ) (Geobacter lovleyi)).